Consider the following 807-residue polypeptide: Glycerol-3-phosphate acyltransferase (807 aa).

The HXXXXD motif motif lies at C305–M310.

Belongs to the GPAT/DAPAT family.

The protein localises to the cell inner membrane. It carries out the reaction sn-glycerol 3-phosphate + an acyl-CoA = a 1-acyl-sn-glycero-3-phosphate + CoA. It functions in the pathway phospholipid metabolism; CDP-diacylglycerol biosynthesis; CDP-diacylglycerol from sn-glycerol 3-phosphate: step 1/3. This chain is Glycerol-3-phosphate acyltransferase, found in Klebsiella pneumoniae (strain 342).